Reading from the N-terminus, the 150-residue chain is Flagellar assembly factor FliW (150 aa).

This sequence belongs to the FliW family. Interacts with translational regulator CsrA and flagellin(s).

Its subcellular location is the cytoplasm. Acts as an anti-CsrA protein, binds CsrA and prevents it from repressing translation of its target genes, one of which is flagellin. Binds to flagellin and participates in the assembly of the flagellum. The protein is Flagellar assembly factor FliW of Leptospira interrogans serogroup Icterohaemorrhagiae serovar copenhageni (strain Fiocruz L1-130).